Consider the following 1083-residue polypeptide: Error-prone DNA polymerase (1083 aa).

This sequence belongs to the DNA polymerase type-C family. DnaE2 subfamily.

The protein localises to the cytoplasm. The catalysed reaction is DNA(n) + a 2'-deoxyribonucleoside 5'-triphosphate = DNA(n+1) + diphosphate. DNA polymerase involved in damage-induced mutagenesis and translesion synthesis (TLS). It is not the major replicative DNA polymerase. In Xanthomonas oryzae pv. oryzae (strain PXO99A), this protein is Error-prone DNA polymerase.